The primary structure comprises 443 residues: Ribulose bisphosphate carboxylase large chain (443 aa).

An N6,N6,N6-trimethyllysine modification is found at lysine 7. Asparagine 116 and threonine 166 together coordinate substrate. Lysine 168 functions as the Proton acceptor in the catalytic mechanism. Substrate is bound at residue lysine 170. 3 residues coordinate Mg(2+): lysine 194, aspartate 196, and glutamate 197. Lysine 194 is subject to N6-carboxylysine. Histidine 287 acts as the Proton acceptor in catalysis. Substrate-binding residues include arginine 288, histidine 320, and serine 372.

This sequence belongs to the RuBisCO large chain family. Type I subfamily. Heterohexadecamer of 8 large chains and 8 small chains; disulfide-linked. The disulfide link is formed within the large subunit homodimers. Requires Mg(2+) as cofactor. Post-translationally, the disulfide bond which can form in the large chain dimeric partners within the hexadecamer appears to be associated with oxidative stress and protein turnover.

The protein localises to the plastid. The protein resides in the chloroplast. The enzyme catalyses 2 (2R)-3-phosphoglycerate + 2 H(+) = D-ribulose 1,5-bisphosphate + CO2 + H2O. It catalyses the reaction D-ribulose 1,5-bisphosphate + O2 = 2-phosphoglycolate + (2R)-3-phosphoglycerate + 2 H(+). Functionally, ruBisCO catalyzes two reactions: the carboxylation of D-ribulose 1,5-bisphosphate, the primary event in carbon dioxide fixation, as well as the oxidative fragmentation of the pentose substrate in the photorespiration process. Both reactions occur simultaneously and in competition at the same active site. The polypeptide is Ribulose bisphosphate carboxylase large chain (Abies homolepis (Nikko fir)).